Consider the following 115-residue polypeptide: Holo-[acyl-carrier-protein] synthase (115 aa).

Mg(2+)-binding residues include D5 and E50.

This sequence belongs to the P-Pant transferase superfamily. AcpS family. Mg(2+) is required as a cofactor.

Its subcellular location is the cytoplasm. The enzyme catalyses apo-[ACP] + CoA = holo-[ACP] + adenosine 3',5'-bisphosphate + H(+). In terms of biological role, transfers the 4'-phosphopantetheine moiety from coenzyme A to a Ser of acyl-carrier-protein. The protein is Holo-[acyl-carrier-protein] synthase of Campylobacter fetus subsp. fetus (strain 82-40).